We begin with the raw amino-acid sequence, 196 residues long: SPRY domain-containing protein 7 (196 aa).

N-acetylalanine is present on A2. The B30.2/SPRY domain occupies 2–184 (AASVFCCLRC…FSEFYHTPPP (183 aa)).

This Bos taurus (Bovine) protein is SPRY domain-containing protein 7 (SPRYD7).